The following is a 399-amino-acid chain: 3-methyl-2-oxobutanoate hydroxymethyltransferase 2, mitochondrial (399 aa).

A mitochondrion-targeting transit peptide spans methionine 1 to arginine 90. Residues aspartate 125 and aspartate 164 each contribute to the Mg(2+) site. 3-methyl-2-oxobutanoate contacts are provided by residues aspartate 125–serine 126, aspartate 164, and lysine 194. Glutamate 196 serves as a coordination point for Mg(2+). Glutamate 264 functions as the Proton acceptor in the catalytic mechanism.

Belongs to the PanB family. Mg(2+) is required as a cofactor.

Its subcellular location is the mitochondrion. It carries out the reaction 3-methyl-2-oxobutanoate + (6R)-5,10-methylene-5,6,7,8-tetrahydrofolate + H2O = 2-dehydropantoate + (6S)-5,6,7,8-tetrahydrofolate. The protein operates within cofactor biosynthesis; (R)-pantothenate biosynthesis; (R)-pantoate from 3-methyl-2-oxobutanoate: step 1/2. In terms of biological role, catalyzes the reversible reaction in which hydroxymethyl group from 5,10-methylenetetrahydrofolate is transferred onto alpha-ketoisovalerate to form ketopantoate. The sequence is that of 3-methyl-2-oxobutanoate hydroxymethyltransferase 2, mitochondrial (KPHMT2) from Oryza sativa subsp. japonica (Rice).